The sequence spans 306 residues: Serine/threonine-protein kinase csk1 (306 aa).

Residues 11 to 306 (LTDIRHLTDG…KVSARLSQYA (296 aa)) enclose the Protein kinase domain. ATP contacts are provided by residues 17–25 (LTDGTISEV) and K40. The Proton acceptor role is filled by D129.

It belongs to the protein kinase superfamily. CMGC Ser/Thr protein kinase family. CDC2/CDKX subfamily.

The enzyme catalyses L-seryl-[protein] + ATP = O-phospho-L-seryl-[protein] + ADP + H(+). It catalyses the reaction L-threonyl-[protein] + ATP = O-phospho-L-threonyl-[protein] + ADP + H(+). Acts as a CAK-activating kinase that specifically activates crk1 of the crk1-mcs2 CAK complex. This is Serine/threonine-protein kinase csk1 (csk1) from Schizosaccharomyces pombe (strain 972 / ATCC 24843) (Fission yeast).